The chain runs to 777 residues: Phosphoribosylformylglycinamidine synthase subunit PurL (777 aa).

The active site involves H50. Residues Y53 and K92 each contribute to the ATP site. Residue E94 coordinates Mg(2+). Residues S95–H98 and R117 contribute to the substrate site. Residue H96 is the Proton acceptor of the active site. D118 contacts Mg(2+). Substrate is bound at residue Q241. Residue D269 participates in Mg(2+) binding. E313–Q315 serves as a coordination point for substrate. Residues D516 and G553 each coordinate ATP. Position 554 (N554) interacts with Mg(2+). S556 lines the substrate pocket.

This sequence belongs to the FGAMS family. In terms of assembly, monomer. Part of the FGAM synthase complex composed of 1 PurL, 1 PurQ and 2 PurS subunits.

The protein resides in the cytoplasm. The catalysed reaction is N(2)-formyl-N(1)-(5-phospho-beta-D-ribosyl)glycinamide + L-glutamine + ATP + H2O = 2-formamido-N(1)-(5-O-phospho-beta-D-ribosyl)acetamidine + L-glutamate + ADP + phosphate + H(+). The protein operates within purine metabolism; IMP biosynthesis via de novo pathway; 5-amino-1-(5-phospho-D-ribosyl)imidazole from N(2)-formyl-N(1)-(5-phospho-D-ribosyl)glycinamide: step 1/2. Part of the phosphoribosylformylglycinamidine synthase complex involved in the purines biosynthetic pathway. Catalyzes the ATP-dependent conversion of formylglycinamide ribonucleotide (FGAR) and glutamine to yield formylglycinamidine ribonucleotide (FGAM) and glutamate. The FGAM synthase complex is composed of three subunits. PurQ produces an ammonia molecule by converting glutamine to glutamate. PurL transfers the ammonia molecule to FGAR to form FGAM in an ATP-dependent manner. PurS interacts with PurQ and PurL and is thought to assist in the transfer of the ammonia molecule from PurQ to PurL. In Synechococcus elongatus (strain ATCC 33912 / PCC 7942 / FACHB-805) (Anacystis nidulans R2), this protein is Phosphoribosylformylglycinamidine synthase subunit PurL.